The sequence spans 366 residues: Mitogen-activated protein kinase p38a (366 aa).

The Protein kinase domain maps to 25–312 (YQDLQPVGSG…AEEALSHPYL (288 aa)). Residues 31–39 (VGSGAYGQV) and Lys54 contribute to the ATP site. Asp154 (proton acceptor) is an active-site residue. The residue at position 184 (Thr184) is a Phosphothreonine. A TXY motif is present at residues 184 to 186 (TGY). A Phosphotyrosine modification is found at Tyr186.

It belongs to the protein kinase superfamily. CMGC Ser/Thr protein kinase family. MAP kinase subfamily. The cofactor is Mg(2+). Post-translationally, dually phosphorylated on Thr-184 and Tyr-186, which activates the enzyme.

Its subcellular location is the nucleus. It catalyses the reaction L-seryl-[protein] + ATP = O-phospho-L-seryl-[protein] + ADP + H(+). It carries out the reaction L-threonyl-[protein] + ATP = O-phospho-L-threonyl-[protein] + ADP + H(+). Activated by threonine and tyrosine phosphorylation by Mkk3 in response to environmental stress. Functionally, kinase involved in a signal transduction pathway. May down-regulate insect immunity gene expression after prolonged infection. This chain is Mitogen-activated protein kinase p38a, found in Drosophila melanogaster (Fruit fly).